Reading from the N-terminus, the 240-residue chain is Ubiquitin domain-containing protein 2 (240 aa).

The interval 1 to 48 (MGGCVGSHHDSSGSLNENSDGTGVALGRNQPLKREKPKWKSDYPMTDG) is disordered. Positions 12-21 (SGSLNENSDG) are enriched in polar residues. Over residues 32-41 (LKREKPKWKS) the composition is skewed to basic and acidic residues. The Ubiquitin-like domain occupies 152-227 (CQLRLRLSTG…VQVIVSQPPT (76 aa)).

It is found in the cytoplasm. This Danio rerio (Zebrafish) protein is Ubiquitin domain-containing protein 2 (ubtd2).